A 5141-amino-acid chain; its full sequence is SCO-spondin (5141 aa).

An N-terminal signal peptide occupies residues 1 to 17 (MLLPALLFGMLWAPANG). Residues 18–102 (HWCEQIETVH…ACCPGWGGIH (85 aa)) enclose the EMI domain. Asn-88, Asn-130, Asn-150, and Asn-167 each carry an N-linked (GlcNAc...) asparagine glycan. In terms of domain architecture, VWFD 1 spans 193–364 (ATCATWSGFH…RLPGYEPGCL (172 aa)). Cystine bridges form between Cys-195–Cys-325, Cys-217–Cys-363, and Cys-239–Cys-245. The TIL 1 domain maps to 472–527 (CPGGQLYSDCISSCPPSCSAVAQGEEGSCGKECVSGCECPTGLFWDGALCVPAAHC). The VWFD 2 domain maps to 565–738 (AECAVGGDGH…FQVSGDGRCP (174 aa)). Cystine bridges form between Cys-567/Cys-700 and Cys-591/Cys-737. Residues Asn-657 and Asn-822 are each glycosylated (N-linked (GlcNAc...) asparagine). The 54-residue stretch at 830 to 883 (CPGGQVYQECAPACGHYCGEPEDCKELGSCVAGCNCPPGLLWDLEGQCVPPSMC) folds into the TIL 2 domain. 3 N-linked (GlcNAc...) asparagine glycosylation sites follow: Asn-895, Asn-949, and Asn-991. In terms of domain architecture, VWFD 3 spans 1017–1187 (GWCQASGAPH…HSWRLNPLCP (171 aa)). 3 cysteine pairs are disulfide-bonded: Cys-1019/Cys-1151, Cys-1041/Cys-1186, and Cys-1062/Cys-1069. In terms of domain architecture, TIL 3 spans 1280–1336 (CEGGQVYEPCGSTCPPTCHDHHPELRWHCQAITCVEGCFCPEGTLLHGGTCVELTDC). N-linked (GlcNAc...) asparagine glycosylation occurs at Asn-1357. LDL-receptor class A domains follow at residues 1380–1417 (GCAEGEALCRESGHCVPLEWLCDNQDDCGDGSDEEGCD), 1420–1456 (VCGEGQMSCQSGRCLPLSLICDGQDDCGDGTDEQGCL), 1456–1492 (LCPQGFLACADGRCLPPALLCDGHPDCLDAADEESCL), and 1496–1534 (SCTSGEVSCVDGPCIRTIQLCDGVWDCPDGADEGPVHCS). 12 disulfides stabilise this stretch: Cys-1381-Cys-1394, Cys-1388-Cys-1407, Cys-1401-Cys-1416, Cys-1421-Cys-1433, Cys-1428-Cys-1446, Cys-1440-Cys-1455, Cys-1457-Cys-1469, Cys-1464-Cys-1482, Cys-1476-Cys-1491, Cys-1497-Cys-1509, Cys-1504-Cys-1522, and Cys-1516-Cys-1533. The tract at residues 1533–1567 (CSSPSLPTPPAGIGQNPSTSSPDTSPSPVGSASPA) is disordered. The segment covering 1549-1567 (PSTSSPDTSPSPVGSASPA) has biased composition (low complexity). LDL-receptor class A domains follow at residues 1569–1605 (PCSLSEFQCNSGECTPRGWRCDREEDCTDGSDELDCG) and 1607–1646 (PCKLYQMPCAHGPHCLSPGQLCDGVAQCPDGSDEDPDVCE). Disulfide bonds link Cys-1570–Cys-1582, Cys-1577–Cys-1595, Cys-1589–Cys-1604, Cys-1608–Cys-1621, Cys-1615–Cys-1634, and Cys-1628–Cys-1645. Asn-1655 and Asn-1668 each carry an N-linked (GlcNAc...) asparagine glycan. The region spanning 1660 to 1700 (PCPEFSCPNGTCIDFLLVCDGSPDCELADETEPSLDEQGCG) is the LDL-receptor class A 7 domain. Cystine bridges form between Cys-1661/Cys-1671, Cys-1666/Cys-1684, Cys-1678/Cys-1699, Cys-1711/Cys-1747, Cys-1715/Cys-1752, Cys-1726/Cys-1737, Cys-1767/Cys-1964, Cys-1771/Cys-1969, and Cys-1781/Cys-1791. 2 TSP type-1 domains span residues 1699-1753 (CGTW…EACP) and 1755-1970 (DGEW…EPCE). Asn-1725 carries N-linked (GlcNAc...) asparagine glycosylation. Asn-1814 carries N-linked (GlcNAc...) asparagine glycosylation. EGF-like domains follow at residues 1829–1868 (CPLTCDDISGEAVCSPDRPCSSPGCWCPEGKVLGTEGRCV) and 1869–1895 (RPRQCPCLVDGIRYWPGQRIKMDCQLC). Residues 1970-2030 (EGCEQWGLTY…GMGESCCHCA (61 aa)) enclose the VWFC 1 domain. Asn-2035 carries N-linked (GlcNAc...) asparagine glycosylation. Disulfide bonds link Cys-2070-Cys-2226, Cys-2236-Cys-2248, Cys-2243-Cys-2261, and Cys-2255-Cys-2270. Residues 2070–2226 (CYSPLGLAGL…IFLWVELLGC (157 aa)) enclose the F5/8 type C domain. A disordered region spans residues 2087 to 2109 (PLEHSTRAAPVEAPTAGPGPRED). 2 N-linked (GlcNAc...) asparagine glycosylation sites follow: Asn-2130 and Asn-2148. Residues 2235–2271 (LCPGTRHRCANGDCALKGGPCDGAVDCEDGSDEEGCG) enclose the LDL-receptor class A 8 domain. Residues 2262–2335 (EDGSDEEGCG…SPSASEGLLP (74 aa)) form a disordered region. The span at 2276–2294 (STASRVHSTARTPALSPTQ) shows a compositional bias: polar residues. Positions 2301-2314 (HPREGLADMEHQQP) are enriched in basic and acidic residues. LDL-receptor class A domains lie at 2391–2427 (RCGPGQVPCDVLGCVEQEQLCDGREDCLDGSDEQHCA) and 2448–2484 (LCSPSQLSCGSGECLPLEHRCDLQVNCQDGSDEDDCV). Cystine bridges form between Cys-2392-Cys-2404, Cys-2399-Cys-2417, Cys-2411-Cys-2426, Cys-2449-Cys-2461, Cys-2456-Cys-2474, Cys-2468-Cys-2483, Cys-2486-Cys-2522, Cys-2497-Cys-2501, Cys-2532-Cys-2537, Cys-2552-Cys-2589, Cys-2556-Cys-2594, and Cys-2567-Cys-2579. TSP type-1 domains follow at residues 2485–2538 (DCVL…QACP) and 2540–2595 (AGAW…QLCP). The TIL 4 domain occupies 2618-2660 (PPCPPSCLDPEANRSCSGHCVEGCRCPPGLFLQDSHCLPLSEC). Asn-2630 and Asn-2679 each carry an N-linked (GlcNAc...) asparagine glycan. TSP type-1 domains are found at residues 2700–2754 (SCGW…TDCG), 2758–2813 (PGWT…SLCP), and 2815–2868 (PSAW…HPCT). 9 disulfides stabilise this stretch: Cys-2701–Cys-2739, Cys-2712–Cys-2716, Cys-2749–Cys-2753, Cys-2769–Cys-2807, Cys-2773–Cys-2812, Cys-2789–Cys-2797, Cys-2827–Cys-2862, Cys-2831–Cys-2867, and Cys-2842–Cys-2852. 2 N-linked (GlcNAc...) asparagine glycosylation sites follow: Asn-2921 and Asn-2951. 2 TSP type-1 domains span residues 2969–3024 (ACGW…RPCQ) and 3025–3068 (GPGA…QPCA). Disulfide bonds link Cys-2970–Cys-3008, Cys-2981–Cys-2985, and Cys-3018–Cys-3023. N-linked (GlcNAc...) asparagine glycans are attached at residues Asn-3046, Asn-3101, Asn-3148, and Asn-3158. Residues 3075–3127 (CPKDQQWLDCAQGPASCAHLSTPREANQTCHPGCYCLSGMLLLNNVCVPAQDC) form the TIL 5 domain. 2 TSP type-1 domains span residues 3168–3235 (QPAW…PGCN) and 3237–3292 (AGVW…QPCP). Cystine bridges form between Cys-3180–Cys-3229, Cys-3184–Cys-3234, Cys-3195–Cys-3219, Cys-3249–Cys-3286, Cys-3253–Cys-3291, and Cys-3264–Cys-3276. The N-linked (GlcNAc...) asparagine glycan is linked to Asn-3295. One can recognise a TIL 6 domain in the interval 3300–3350 (EGAEYSPCGPPCPRSCDDLVHCMWHCQPGCYCPPGKVLSADGAICVQPHHC). The N-linked (GlcNAc...) asparagine glycan is linked to Asn-3384. TSP type-1 domains follow at residues 3393 to 3455 (SGDW…TACP) and 3457 to 3512 (DGAW…TPCT). 6 disulfides stabilise this stretch: Cys-3405/Cys-3448, Cys-3409/Cys-3454, Cys-3420/Cys-3432, Cys-3469/Cys-3504, Cys-3472/Cys-3511, and Cys-3482/Cys-3494. N-linked (GlcNAc...) asparagine glycosylation is present at Asn-3506. Residues 3514–3570 (CGGGQDLLPCGQPCPHSCQDLSLGSTCQPGSSGCQSGCGCPPGQLSQDGLCVFPADC) enclose the TIL 7 domain. Asn-3584 and Asn-3611 each carry an N-linked (GlcNAc...) asparagine glycan. The TSP type-1 14 domain maps to 3630–3678 (PGIWSSWGPWEKCSVPCGGGEQLRSRQCARPPCPGLAQQSRTCHIHVCR). Cystine bridges form between Cys-3642–Cys-3672, Cys-3646–Cys-3677, and Cys-3657–Cys-3662. An N-linked (GlcNAc...) asparagine glycan is attached at Asn-3787. 4 TSP type-1 domains span residues 3806–3862 (RGYF…PECP), 3876–3928 (AGGW…PSCT), 3942–3998 (NCFW…RACP), and 4000–4055 (PGGW…MPCE). Intrachain disulfides connect Cys-3818–Cys-3856, Cys-3822–Cys-3861, and Cys-3834–Cys-3846. N-linked (GlcNAc...) asparagine glycosylation occurs at Asn-3910. Cystine bridges form between Cys-3943–Cys-3979, Cys-3954–Cys-3958, Cys-3992–Cys-3997, Cys-4012–Cys-4049, Cys-4016–Cys-4054, and Cys-4027–Cys-4039. In terms of domain architecture, TIL 8 spans 4058–4113 (CPAGMEMVSCANRCPYSCSDLQEAVMCQEDQACQLGCRCSEGFLEQDGGCVPVGHC). Asn-4135 carries an N-linked (GlcNAc...) asparagine glycan. TSP type-1 domains lie at 4155-4208 (HCAW…DPCP), 4249-4304 (PGGW…QLCL), 4306-4362 (LLEI…GPCQ), and 4364-4418 (DCMW…GNCS). Cystine bridges form between Cys-4156–Cys-4192, Cys-4167–Cys-4171, Cys-4202–Cys-4207, Cys-4261–Cys-4298, Cys-4265–Cys-4303, and Cys-4276–Cys-4288. The N-linked (GlcNAc...) asparagine glycan is linked to Asn-4345. Intrachain disulfides connect Cys-4365-Cys-4402, Cys-4376-Cys-4378, and Cys-4412-Cys-4417. Asn-4416 carries N-linked (GlcNAc...) asparagine glycosylation. The 56-residue stretch at 4422–4477 (CLPPFEFQSCGSPCAGLCATHLSHQLCQDLPPCQPGCYCPMGLLEQDGGCILPEQC) folds into the TIL 9 domain. The N-linked (GlcNAc...) asparagine glycan is linked to Asn-4557. The TSP type-1 23 domain maps to 4608–4659 (TCQWGPWGPWSPCQVPCSGGFKLRWREASDNSVGECRGPWAQTESCNMGSCP). 3 disulfide bridges follow: Cys-4609/Cys-4643, Cys-4620/Cys-4624, and Cys-4653/Cys-4658. The TIL 10 domain maps to 4673 to 4719 (DCANQCPRSCADLWEGVQCLQGPCSPGCRCPPGQLVQDGHCVPISSC). 3 N-linked (GlcNAc...) asparagine glycosylation sites follow: Asn-4727, Asn-4744, and Asn-4749. The TSP type-1 24 domain occupies 4759–4812 (CPVLGPWSPWSECSAVCGGGTMVRYRSCEEHPDSAPCQALDMEQRVECNLQTCP). Cystine bridges form between Cys-4771/Cys-4806, Cys-4775/Cys-4811, and Cys-4786/Cys-4795. Residues 4814–4868 (CPPGQVLSTCATLCPSFCSHLWPGTICVREPCQLGCGCPGGQLLHSGTCIPPEAC) enclose the TIL 11 domain. Residues Asn-4899, Asn-4942, and Asn-4949 are each glycosylated (N-linked (GlcNAc...) asparagine). Residues 4920–4978 (CPPGEILQLGELRPCEKTCLEMNKTQAWSNCTEAQVPGCVCQLGHFRSHTGLCVPEDHC) form the TIL 12 domain. In terms of domain architecture, VWFC 2 spans 4978-5036 (CECWHHGSPHLPGSEWQEACESCRCLHGKSVCTQHCPELSCAQGEVVVQEPGSCCPICQ). 4 disulfide bridges follow: Cys-5047-Cys-5095, Cys-5061-Cys-5112, Cys-5071-Cys-5128, and Cys-5075-Cys-5130. The 88-residue stretch at 5047-5134 (CRHLTELRNL…IHNCHCSACQ (88 aa)) folds into the CTCK domain. A glycan (N-linked (GlcNAc...) asparagine) is linked at Asn-5055.

This sequence belongs to the thrombospondin family.

It is found in the secreted. The protein resides in the extracellular space. Its function is as follows. Involved in the modulation of neuronal aggregation. May be involved in developmental events during the formation of the central nervous system. This is SCO-spondin from Rattus norvegicus (Rat).